The following is a 724-amino-acid chain: Disks large homolog 4 (724 aa).

S-palmitoyl cysteine attachment occurs at residues C3 and C5. The tract at residues 15–35 (QDEDTPPLEHSPAHLPNQANS) is disordered. 2 consecutive PDZ domains span residues 65-151 (EITL…VMRR) and 160-246 (EIKL…VAKP). Phosphoserine occurs at positions 73 and 142. Y240 carries the post-translational modification Phosphotyrosine. S295 is modified (phosphoserine). In terms of domain architecture, PDZ 3 spans 313–393 (RIVIHRGSTG…QTVTIIAQYK (81 aa)). Phosphoserine occurs at positions 415 and 418. At T420 the chain carries Phosphothreonine. 4 positions are modified to phosphoserine: S422, S425, S449, and S480. Positions 428 to 498 (KRGFYIRALF…PSKRRVERRE (71 aa)) constitute an SH3 domain. The Guanylate kinase-like domain maps to 534 to 709 (ARPIIILGPT…IYHKVKRVIE (176 aa)). Y580 bears the Phosphotyrosine mark. Residues S606 and S654 each carry the phosphoserine modification. Y715 is modified (phosphotyrosine).

It belongs to the MAGUK family. Interacts through its PDZ domains with ANO2 and NETO1. Interacts with KCNJ4. Interacts through its first two PDZ domains with GRIN2A, GRIN2B, GRIN2C and GRIN2D. Interacts with ERBB4. Interacts with KCNA1, KCNA2, KCNA3 and KCNA4. Interacts with LRRC4 and LRRC4B. Interacts with SYNGAP1. Interacts with ASIC3. Interacts with SEMA4C. Interacts with CXADR. Interacts with KCND2. Interacts (via first PDZ domain) with CRIPT. Interacts through its first PDZ domain with GRIK2 and KCNA4. Interacts through its second PDZ domain with the PDZ domain of NOS1 or the C-terminus of CAPON. Interacts through its third PDZ domain with NLGN1 and CRIPT, and probably with NLGN2 and NLGN3. Interacts through its guanylate kinase-like domain with DLGAP1/GKAP, DLGAP2, DLGAP3, DLGAP4, MAP1A, BEGAIN and SIPA1L1. Interacts through its guanylate kinase-like domain with KIF13B. Isoform 2 interacts through an L27 domain with HGS/HRS and the first L27 domain of CASK. Interacts with ANKS1B. Interacts with ADR1B. May interact with HTR2A. Interacts with ADAM22, KLHL17 and LGI1. Interacts with FRMPD4 (via C-terminus). Interacts with LRFN1 and LRFN2. Interacts with LRFN4. Interacts (via N-terminal tandem pair of PDZ domains) with GPER1 (via C-terminus tail motif); the interaction is direct and induces the increase of GPER1 protein levels residing at the plasma membrane surface in a estradiol-independent manner. Interacts (via N-terminus tandem pair of PDZ domains) with NOS1 (via N-terminal domain). Interacts with SHANK3. Interacts with GPR85. Interacts with CACNG2 and MPP2 (via the SH3-Guanylate kinase-like sub-module). Interacts with ADGRB1. Found in a complex with PRR7 and GRIN1. Interacts (via PDZ3 domain and to lesser degree via PDZ2 domain) with PRR7. Component of the postsynaptic hippocampal AMPA-type glutamate receptor (AMPAR) complex, at least composed of pore forming AMPAR subunits GRIA1, GRIA2 and GRIA3 and AMPAR auxiliary proteins SHISA6 and SHISA7. Interacts (via its first two PDZ domains) with SHISA6 and SHISA7 (via PDZ-binding motif); the interaction is direct. Interacts (via PDZ domain 2) with SEMA4F (via PDZ-binding motif); this interaction may promote translocation of DLG4/SAP90 to the membrane. Interacts with RPH3A and GRIN2A; this ternary complex regulates NMDA receptor composition at postsynaptic membranes. Interacts with ABR and BCR. Interacts with DGKI (via PDZ-binding motif); controls the localization of DGKI to the synapse. Interacts with C9orf72, SMCR8 and RAB39B. Interacts with ZDHHC5. Interacts with PTEN (via PDZ domain-binding motif); the interaction is induced by NMDA and is required for PTEN location at postsynaptic density. Found in a complex with GRIA1, GRIA2, GRIA3, GRIA4, CACNG8 and CNIH2. Interacts with FAM81A; the interaction facilitates condensate formation via liquid-liquid phase separation. Interacts with ADGRL3. Interacts with SORCS3. Palmitoylated. Palmitoylation is required for targeting to postsynaptic density, plasma membrane and synapses. Palmitoylation by ZDHHC2 occurs when the synaptic activity decreases and induces DLG4 synaptic clustering. Palmitoylation by ZDHHC15 regulates trafficking to the postsynaptic density and function in synaptogenesis. Palmitoylation may play a role in glutamate receptor GRIA1 synapse clustering. Depalmitoylated by ABHD17A and ABHD17B and to a lesser extent by ABHD17C, ABHD12, ABHD13, LYPLA1 and LYPLA2. Undergoes rapid synaptic palmitoylation/depalmitoylation cycle during neuronal development which slows down in mature neurons. In terms of processing, ubiquitinated by MDM2 in response to NMDA receptor activation, leading to proteasome-mediated degradation of DLG4 which is required for AMPA receptor endocytosis. As to expression, expressed in brain (at protein level). Detected in juxtaparanodal zones in the central nervous system and at nerve terminal plexuses of basket cells in the cerebellum. Expressed in cerebrum. Expressed in hippocampal neurons (at protein level). Isoform 1 and isoform 2: highly expressed in cerebellum, cortex, hippocampus, and corpus striatum.

The protein localises to the cell membrane. Its subcellular location is the postsynaptic density. It localises to the synapse. The protein resides in the cytoplasm. It is found in the cell projection. The protein localises to the axon. Its subcellular location is the dendritic spine. It localises to the dendrite. The protein resides in the presynapse. Its function is as follows. Postsynaptic scaffolding protein that plays a critical role in synaptogenesis and synaptic plasticity by providing a platform for the postsynaptic clustering of crucial synaptic proteins. Interacts with the cytoplasmic tail of NMDA receptor subunits and shaker-type potassium channels. Required for synaptic plasticity associated with NMDA receptor signaling. Overexpression or depletion of DLG4 changes the ratio of excitatory to inhibitory synapses in hippocampal neurons. May reduce the amplitude of ASIC3 acid-evoked currents by retaining the channel intracellularly. May regulate the intracellular trafficking of ADR1B. Also regulates AMPA-type glutamate receptor (AMPAR) immobilization at postsynaptic density keeping the channels in an activated state in the presence of glutamate and preventing synaptic depression. Under basal conditions, cooperates with FYN to stabilize palmitoyltransferase ZDHHC5 at the synaptic membrane through FYN-mediated phosphorylation of ZDHHC5 and its subsequent inhibition of association with endocytic proteins. In Rattus norvegicus (Rat), this protein is Disks large homolog 4.